The primary structure comprises 123 residues: NADH dehydrogenase [ubiquinone] 1 beta subcomplex subunit 7 (123 aa).

Positions 1–32 (MGTKLSVSLEGASTPETAPRVDRPPTFDPQYG) are disordered. One can recognise a CHCH domain in the interval 59–102 (RDYCAHHLISLMKCQTQNAPFAGHACDGERGAWDKCEYDDHIMR). Short sequence motifs (cx9C motif) lie at residues 62 to 72 (CAHHLISLMKC) and 84 to 94 (CDGERGAWDKC). 2 disulfide bridges follow: C62–C94 and C72–C84.

The protein belongs to the complex I NDUFB7 subunit family. As to quaternary structure, complex I is composed of 45 different subunits.

It is found in the mitochondrion. The protein resides in the mitochondrion inner membrane. Its subcellular location is the mitochondrion intermembrane space. Accessory subunit of the mitochondrial membrane respiratory chain NADH dehydrogenase (Complex I), that is believed not to be involved in catalysis. Complex I functions in the transfer of electrons from NADH to the respiratory chain. The immediate electron acceptor for the enzyme is believed to be ubiquinone. The protein is NADH dehydrogenase [ubiquinone] 1 beta subcomplex subunit 7 of Caenorhabditis elegans.